We begin with the raw amino-acid sequence, 667 residues long: UvrABC system protein B (667 aa).

Residues 28-185 enclose the Helicase ATP-binding domain; it reads NNFKQGLKEQ…NKLIELKYQR (158 aa). Residue 41–48 participates in ATP binding; it reads GATGTGKT. The Beta-hairpin signature appears at 94 to 117; that stretch reads YYDYYQPEAYVASSDTYIEKDSKI. One can recognise a Helicase C-terminal domain in the interval 432-594; sequence QMDDLYFEIK…VTPTALNKTI (163 aa). The UVR domain occupies 629–664; sequence NKEIKRLQKTMKEAAKALDFEKAATLRDLILDLEKK.

This sequence belongs to the UvrB family. Forms a heterotetramer with UvrA during the search for lesions. Interacts with UvrC in an incision complex.

The protein localises to the cytoplasm. In terms of biological role, the UvrABC repair system catalyzes the recognition and processing of DNA lesions. A damage recognition complex composed of 2 UvrA and 2 UvrB subunits scans DNA for abnormalities. Upon binding of the UvrA(2)B(2) complex to a putative damaged site, the DNA wraps around one UvrB monomer. DNA wrap is dependent on ATP binding by UvrB and probably causes local melting of the DNA helix, facilitating insertion of UvrB beta-hairpin between the DNA strands. Then UvrB probes one DNA strand for the presence of a lesion. If a lesion is found the UvrA subunits dissociate and the UvrB-DNA preincision complex is formed. This complex is subsequently bound by UvrC and the second UvrB is released. If no lesion is found, the DNA wraps around the other UvrB subunit that will check the other stand for damage. The sequence is that of UvrABC system protein B from Aster yellows witches'-broom phytoplasma (strain AYWB).